The following is a 44-amino-acid chain: Thymosin beta-4 (44 aa).

The tract at residues M1–S44 is disordered. Residue S2 is modified to N-acetylserine. The residue at position 2 (S2) is a Phosphoserine. The residue at position 4 (K4) is an N6-acetyllysine. At K12 the chain carries N6-acetyllysine; alternate. A Glycyl lysine isopeptide (Lys-Gly) (interchain with G-Cter in SUMO2); alternate cross-link involves residue K12. Phosphothreonine is present on T23. K26 is subject to N6-acetyllysine. S31 bears the Phosphoserine mark. K32 bears the N6-acetyllysine mark. Residues E33–S44 are compositionally biased toward basic and acidic residues. Phosphothreonine is present on T34. Position 39 is an N6-acetyllysine (K39).

It belongs to the thymosin beta family. In terms of assembly, identified in a complex composed of ACTA1, COBL, GSN AND TMSB4X. Interacts with SERPINB1. Post-translationally, acSDKP is inactivated by ACE, which removes the dipeptide Lys-Pro from its C-terminus.

The protein localises to the cytoplasm. The protein resides in the cytoskeleton. In terms of biological role, plays an important role in the organization of the cytoskeleton. Binds to and sequesters actin monomers (G actin) and therefore inhibits actin polymerization. Functionally, potent inhibitor of bone marrow derived stem cell differentiation. Acts by inhibits the entry of hematopoietic pluripotent stem cells into the S-phase. In Notamacropus eugenii (Tammar wallaby), this protein is Thymosin beta-4 (TMSB4).